The chain runs to 174 residues: UBX domain-containing protein 5 (174 aa).

Residues 8 to 58 (QKEKFAEDRALLSQQNKEYAESLAKDIAKKEEKDKIRFEAEQKELRKKTIQ) are a coiled coil. Positions 74–120 (RLLVRYPNGSRLILSFSPSQPMTSLFDAIILNPACPDYFSVRSVYPR) constitute a UBX domain.

As to quaternary structure, forms a complex composed of deubiquitinating enzyme atx-3, adapter ubxn-5 and cdc-48.1. Interacts with atx-3 (via C-terminus). Interacts with cdc-48.1 (via N-terminus) and cdc-48.2. In terms of tissue distribution, specifically expressed in the germline.

Functionally, probably acts as an adapter for ATPase cdc-48.1 and/or cdc-48.2, conferring substrate specificity. Unlike other UBX domain-containing protein does not bind 'Lys-48'-polyubiquitinated chain. This chain is UBX domain-containing protein 5, found in Caenorhabditis elegans.